The sequence spans 1105 residues: ATP-dependent DNA helicase MPH1 (1105 aa).

Positions 94-261 (IVQRAFYDNL…EIIDNLSISK (168 aa)) constitute a Helicase ATP-binding domain. 107-114 (LPTGLGKT) contacts ATP. A DEAH box motif is present at residues 209–212 (DEAH). The Helicase C-terminal domain occupies 468–641 (SIERIGSNLR…LITLAQSNRI (174 aa)). Disordered regions lie at residues 493 to 534 (EEAY…AQIK), 684 to 708 (KGKK…EKRF), 758 to 824 (IQSK…PKLG), 850 to 880 (LVTG…ECAP), and 918 to 953 (VSDD…FDEG). A compositionally biased stretch (basic residues) spans 499–511 (KGKKGRTKGKATK). Positions 518-532 (TPERSTSRTSSEDAQ) are enriched in basic and acidic residues. The segment covering 684–705 (KGKKVTKSKSKSKSNSKSKKIE) has biased composition (basic residues). The span at 764–787 (PVKENQSKRPNSEHICEEDSRQET) shows a compositional bias: basic and acidic residues. A compositionally biased stretch (low complexity) spans 788-799 (ENNSNESNGSFE). Over residues 927–943 (DSINNQQLHKNKNLGST) the composition is skewed to polar residues. Residues 944–953 (SDDDDAFDEG) are compositionally biased toward acidic residues.

This sequence belongs to the DEAD box helicase family. DEAH subfamily. FANCM sub-subfamily. In terms of assembly, interacts with the MHF histone-fold complex to form the FANCM-MHF complex.

The protein localises to the nucleus. The enzyme catalyses ATP + H2O = ADP + phosphate + H(+). ATP-dependent DNA helicase involved in DNA damage repair by homologous recombination and in genome maintenance. Capable of unwinding D-loops. Plays a role in limiting crossover recombinants during mitotic DNA double-strand break (DSB) repair. Component of a FANCM-MHF complex which promotes gene conversion at blocked replication forks, probably by reversal of the stalled fork. The chain is ATP-dependent DNA helicase MPH1 from Debaryomyces hansenii (strain ATCC 36239 / CBS 767 / BCRC 21394 / JCM 1990 / NBRC 0083 / IGC 2968) (Yeast).